The chain runs to 370 residues: Erythronate-4-phosphate dehydrogenase (370 aa).

Substrate-binding residues include serine 45 and threonine 66. The NAD(+) site is built by aspartate 142 and threonine 169. The active site involves arginine 202. Aspartate 228 is an NAD(+) binding site. The active site involves glutamate 233. Histidine 250 serves as the catalytic Proton donor. Glycine 253 contacts NAD(+). A substrate-binding site is contributed by tyrosine 254.

It belongs to the D-isomer specific 2-hydroxyacid dehydrogenase family. PdxB subfamily. As to quaternary structure, homodimer.

It is found in the cytoplasm. The enzyme catalyses 4-phospho-D-erythronate + NAD(+) = (R)-3-hydroxy-2-oxo-4-phosphooxybutanoate + NADH + H(+). Its pathway is cofactor biosynthesis; pyridoxine 5'-phosphate biosynthesis; pyridoxine 5'-phosphate from D-erythrose 4-phosphate: step 2/5. In terms of biological role, catalyzes the oxidation of erythronate-4-phosphate to 3-hydroxy-2-oxo-4-phosphonooxybutanoate. The sequence is that of Erythronate-4-phosphate dehydrogenase from Teredinibacter turnerae (strain ATCC 39867 / T7901).